Consider the following 104-residue polypeptide: Integration host factor subunit alpha (104 aa).

Positions 51–70 (GNFQLRDKPQRPGRNPKTGE) are disordered.

It belongs to the bacterial histone-like protein family. Heterodimer of an alpha and a beta chain.

This protein is one of the two subunits of integration host factor, a specific DNA-binding protein that functions in genetic recombination as well as in transcriptional and translational control. This is Integration host factor subunit alpha from Ralstonia nicotianae (strain ATCC BAA-1114 / GMI1000) (Ralstonia solanacearum).